A 118-amino-acid chain; its full sequence is MSQQIKIKVSDKVEGIVERDIQNNVANRRELYIKLFHIGSGTPSRKELVKAIASTFSTAEDLVVVKKVFTNYGSGISYARVNVYKDKDSLQKLEPQYLIGRDTGQKIKKGGKSAQKQQ.

It belongs to the eukaryotic ribosomal protein eS24 family.

The protein is Small ribosomal subunit protein eS24 of Sulfolobus acidocaldarius (strain ATCC 33909 / DSM 639 / JCM 8929 / NBRC 15157 / NCIMB 11770).